Reading from the N-terminus, the 115-residue chain is Large ribosomal subunit protein bL19 (115 aa).

This sequence belongs to the bacterial ribosomal protein bL19 family.

Functionally, this protein is located at the 30S-50S ribosomal subunit interface and may play a role in the structure and function of the aminoacyl-tRNA binding site. The chain is Large ribosomal subunit protein bL19 from Koribacter versatilis (strain Ellin345).